The primary structure comprises 269 residues: Tryptophan synthase alpha chain (269 aa).

Residues Glu-49 and Asp-60 each act as proton acceptor in the active site.

It belongs to the TrpA family. In terms of assembly, tetramer of two alpha and two beta chains.

The catalysed reaction is (1S,2R)-1-C-(indol-3-yl)glycerol 3-phosphate + L-serine = D-glyceraldehyde 3-phosphate + L-tryptophan + H2O. It functions in the pathway amino-acid biosynthesis; L-tryptophan biosynthesis; L-tryptophan from chorismate: step 5/5. Functionally, the alpha subunit is responsible for the aldol cleavage of indoleglycerol phosphate to indole and glyceraldehyde 3-phosphate. The sequence is that of Tryptophan synthase alpha chain from Acidovorax sp. (strain JS42).